Reading from the N-terminus, the 417-residue chain is D-amino acid dehydrogenase (417 aa).

3–17 (AVVLGSGVVGLMSAW) provides a ligand contact to FAD.

It belongs to the DadA oxidoreductase family. It depends on FAD as a cofactor.

The enzyme catalyses a D-alpha-amino acid + A + H2O = a 2-oxocarboxylate + AH2 + NH4(+). Oxidative deamination of D-amino acids. This is D-amino acid dehydrogenase from Vibrio vulnificus (strain YJ016).